The primary structure comprises 460 residues: tRNA modification GTPase MnmE (460 aa).

Residues Arg29, Glu89, and Arg128 each coordinate (6S)-5-formyl-5,6,7,8-tetrahydrofolate. The TrmE-type G domain maps to 224–382 (GVPTVIIGKP…LKQNLLEIIQ (159 aa)). Residue Asn234 coordinates K(+). Residues 234–239 (NAGKST), 253–259 (SEIAGTT), and 278–281 (DTAG) each bind GTP. Ser238 provides a ligand contact to Mg(2+). K(+) is bound by residues Ser253, Ile255, and Thr258. Thr259 lines the Mg(2+) pocket. Position 460 (Lys460) interacts with (6S)-5-formyl-5,6,7,8-tetrahydrofolate.

The protein belongs to the TRAFAC class TrmE-Era-EngA-EngB-Septin-like GTPase superfamily. TrmE GTPase family. Homodimer. Heterotetramer of two MnmE and two MnmG subunits. Requires K(+) as cofactor.

It is found in the cytoplasm. Exhibits a very high intrinsic GTPase hydrolysis rate. Involved in the addition of a carboxymethylaminomethyl (cmnm) group at the wobble position (U34) of certain tRNAs, forming tRNA-cmnm(5)s(2)U34. The polypeptide is tRNA modification GTPase MnmE (Cytophaga hutchinsonii (strain ATCC 33406 / DSM 1761 / CIP 103989 / NBRC 15051 / NCIMB 9469 / D465)).